A 119-amino-acid polypeptide reads, in one-letter code: MATRIPKTPSTPPAQKPAGDDGDSVVLERRPQKTAPPQMYQVVMLNDDYTPMEFVIVVLQEYFNKDRETATQIMLKIHLDGRGVCGVYSRDLAATKVNQVMEAAHQAGHPLQCVSEPIA.

The segment at 1–33 (MATRIPKTPSTPPAQKPAGDDGDSVVLERRPQK) is disordered.

It belongs to the ClpS family. As to quaternary structure, binds to the N-terminal domain of the chaperone ClpA.

Its function is as follows. Involved in the modulation of the specificity of the ClpAP-mediated ATP-dependent protein degradation. The sequence is that of ATP-dependent Clp protease adapter protein ClpS from Variovorax paradoxus (strain S110).